Consider the following 210-residue polypeptide: Uracil phosphoribosyltransferase (210 aa).

Residues Arg78, Arg103, and 130–138 (DPMLATGGS) each bind 5-phospho-alpha-D-ribose 1-diphosphate. Uracil contacts are provided by residues Ile193 and 198–200 (GDA). Asp199 is a 5-phospho-alpha-D-ribose 1-diphosphate binding site.

Belongs to the UPRTase family. It depends on Mg(2+) as a cofactor.

The catalysed reaction is UMP + diphosphate = 5-phospho-alpha-D-ribose 1-diphosphate + uracil. Its pathway is pyrimidine metabolism; UMP biosynthesis via salvage pathway; UMP from uracil: step 1/1. Its activity is regulated as follows. Allosterically activated by GTP. Catalyzes the conversion of uracil and 5-phospho-alpha-D-ribose 1-diphosphate (PRPP) to UMP and diphosphate. In Salinibacter ruber (strain DSM 13855 / M31), this protein is Uracil phosphoribosyltransferase.